The primary structure comprises 305 residues: Homoserine O-acetyltransferase (305 aa).

Catalysis depends on C142, which acts as the Acyl-thioester intermediate. Substrate contacts are provided by K163 and S192. H233 functions as the Proton acceptor in the catalytic mechanism. The active site involves E235. R247 serves as a coordination point for substrate.

This sequence belongs to the MetA family.

It localises to the cytoplasm. The enzyme catalyses L-homoserine + acetyl-CoA = O-acetyl-L-homoserine + CoA. It functions in the pathway amino-acid biosynthesis; L-methionine biosynthesis via de novo pathway; O-acetyl-L-homoserine from L-homoserine: step 1/1. Transfers an acetyl group from acetyl-CoA to L-homoserine, forming acetyl-L-homoserine. The polypeptide is Homoserine O-acetyltransferase (Methanomassiliicoccus intestinalis (strain Issoire-Mx1)).